A 69-amino-acid chain; its full sequence is Large ribosomal subunit protein uL29 (69 aa).

This sequence belongs to the universal ribosomal protein uL29 family.

The sequence is that of Large ribosomal subunit protein uL29 from Granulibacter bethesdensis (strain ATCC BAA-1260 / CGDNIH1).